The sequence spans 317 residues: MSQEYLDFELPIAELEAKIESLRAVSGDDNEINLDDEIKRLQKKSEELTKKTFANLDAWQISRMARHPNRPYTLDYIQHIFTEFEELAGDRAFADDKAIVGGLARLDGRPVMVIGHQKGRTTKEKVLRNFGMPAPEGYRKALRLMEMAERFKLPIITFIDTPGAYPGVGAEERGQAEAIARNLREMSTLSVPVICTVIGEGGSGGALAIGVGDKVNMLQYSTYSVISPEGCASILWKSAEKASTAAEVMGLTAERLKELDLIDNIVTEPLGGAHRNYAETAQNLKARLLTDLEDLDVLDKDDLLDRRYQRLMSYGYC.

In terms of domain architecture, CoA carboxyltransferase C-terminal spans 40–294 (RLQKKSEELT…KARLLTDLED (255 aa)).

It belongs to the AccA family. As to quaternary structure, acetyl-CoA carboxylase is a heterohexamer composed of biotin carboxyl carrier protein (AccB), biotin carboxylase (AccC) and two subunits each of ACCase subunit alpha (AccA) and ACCase subunit beta (AccD).

The protein localises to the cytoplasm. It carries out the reaction N(6)-carboxybiotinyl-L-lysyl-[protein] + acetyl-CoA = N(6)-biotinyl-L-lysyl-[protein] + malonyl-CoA. Its pathway is lipid metabolism; malonyl-CoA biosynthesis; malonyl-CoA from acetyl-CoA: step 1/1. Its function is as follows. Component of the acetyl coenzyme A carboxylase (ACC) complex. First, biotin carboxylase catalyzes the carboxylation of biotin on its carrier protein (BCCP) and then the CO(2) group is transferred by the carboxyltransferase to acetyl-CoA to form malonyl-CoA. The protein is Acetyl-coenzyme A carboxylase carboxyl transferase subunit alpha of Actinobacillus succinogenes (strain ATCC 55618 / DSM 22257 / CCUG 43843 / 130Z).